The following is a 300-amino-acid chain: 17-beta-hydroxysteroid dehydrogenase 13 (300 aa).

The signal sequence occupies residues 1-19; the sequence is MNIILEILLLLITIIYSYL. Position 33 is a phosphoserine (Ser33). An NAD(+)-binding site is contributed by 40-67; that stretch reads LITGAGHGIGRQTTYEFAKRQSILVLWD. Substrate is bound at residue Ser172. Tyr185 serves as the catalytic Proton acceptor. Lys189 serves as a coordination point for NAD(+).

Belongs to the short-chain dehydrogenases/reductases (SDR) family. In terms of tissue distribution, highly expressed in the liver. Also detected in ovary, bone marrow, kidney, brain, lung, skeletal muscle, bladder and testis.

The protein resides in the lipid droplet. It is found in the endoplasmic reticulum. The protein localises to the cytoplasm. It carries out the reaction 17beta-estradiol + NAD(+) = estrone + NADH + H(+). The enzyme catalyses all-trans-retinol + NAD(+) = all-trans-retinal + NADH + H(+). It catalyses the reaction all-trans-retinal + NAD(+) + H2O = all-trans-retinoate + NADH + 2 H(+). Functionally, plays a pivotal role in hepatic lipid metabolism. In vitro, it catalyzes the oxidation of a variety of lipid substrates, including 17beta-estradiol, retinol, retinal, and leukotriene B4. In terms of biological role, has retinol/retinal dehydrogenase activity in vitro. Does not have retinol/retinal dehydrogenase activity in vitro. This is 17-beta-hydroxysteroid dehydrogenase 13 from Homo sapiens (Human).